A 79-amino-acid chain; its full sequence is Sec-independent protein translocase protein TatA (79 aa).

The helical transmembrane segment at 1-21 (MGGFTSIWHWVIVLLVIVLLF) threads the bilayer. The tract at residues 48–79 (EEEAKNEPKTLDAQATQTKAHESSEIKSKQES) is disordered. Positions 66 to 79 (KAHESSEIKSKQES) are enriched in basic and acidic residues.

It belongs to the TatA/E family. The Tat system comprises two distinct complexes: a TatABC complex, containing multiple copies of TatA, TatB and TatC subunits, and a separate TatA complex, containing only TatA subunits. Substrates initially bind to the TatABC complex, which probably triggers association of the separate TatA complex to form the active translocon.

It localises to the cell inner membrane. Its function is as follows. Part of the twin-arginine translocation (Tat) system that transports large folded proteins containing a characteristic twin-arginine motif in their signal peptide across membranes. TatA could form the protein-conducting channel of the Tat system. In Helicobacter pylori (strain P12), this protein is Sec-independent protein translocase protein TatA.